Consider the following 249-residue polypeptide: Ubiquinone biosynthesis O-methyltransferase (249 aa).

4 residues coordinate S-adenosyl-L-methionine: Arg41, Gly72, Asp93, and Met136.

The protein belongs to the methyltransferase superfamily. UbiG/COQ3 family.

The catalysed reaction is a 3-demethylubiquinol + S-adenosyl-L-methionine = a ubiquinol + S-adenosyl-L-homocysteine + H(+). The enzyme catalyses a 3-(all-trans-polyprenyl)benzene-1,2-diol + S-adenosyl-L-methionine = a 2-methoxy-6-(all-trans-polyprenyl)phenol + S-adenosyl-L-homocysteine + H(+). Its pathway is cofactor biosynthesis; ubiquinone biosynthesis. Its function is as follows. O-methyltransferase that catalyzes the 2 O-methylation steps in the ubiquinone biosynthetic pathway. This is Ubiquinone biosynthesis O-methyltransferase from Methylobacterium sp. (strain 4-46).